A 464-amino-acid chain; its full sequence is Serine--tRNA synthetase-like protein Slimp (464 aa).

It belongs to the class-II aminoacyl-tRNA synthetase family. Type-1 seryl-tRNA synthetase subfamily.

It localises to the mitochondrion. Essential protein which may play a role in mitochondrial morphogenesis and function. Has transfer RNA (tRNA)-binding activity and can bind tRNA(Ser) but does not have serine--tRNA ligase activity and does not bind ATP. This chain is Serine--tRNA synthetase-like protein Slimp, found in Drosophila melanogaster (Fruit fly).